The primary structure comprises 345 residues: MTDKTSLSYKDAGVDIDAGNALVDRIKGVVKKTRRPEVMGGLGGFGALCALPQKYREPVLVSGTDGVGTKLRLAMDLKRHDAIGIDLVAMCVNDLVVQGAEPLFFLDYYATGKLDVDTAASVINGIAEGCLQSGCALVGGETAEMPGMYHGEDYDVAGFCVGVVEKSEIIDGSRVAEGDVLIALGSSGPHSNGYSLVRKIIDVSGCDPQTTLLEGKPLADHLLEPTRIYVKSVLELIENVDVHAIAHLTGGGFWENIPRVLPENTQAVINESSWQWPAIFTWLQTAGNVSRHEMYRTFNCGVGMVIALSAPEADKALALLNEKGENAWKIGIIKASDSEQRVVIE.

Belongs to the AIR synthase family.

It localises to the cytoplasm. The enzyme catalyses 2-formamido-N(1)-(5-O-phospho-beta-D-ribosyl)acetamidine + ATP = 5-amino-1-(5-phospho-beta-D-ribosyl)imidazole + ADP + phosphate + H(+). The protein operates within purine metabolism; IMP biosynthesis via de novo pathway; 5-amino-1-(5-phospho-D-ribosyl)imidazole from N(2)-formyl-N(1)-(5-phospho-D-ribosyl)glycinamide: step 2/2. This chain is Phosphoribosylformylglycinamidine cyclo-ligase, found in Salmonella typhimurium (strain LT2 / SGSC1412 / ATCC 700720).